The chain runs to 285 residues: Putative sugar uptake protein lin0444 (285 aa).

9 helical membrane-spanning segments follow: residues 2 to 21, 31 to 50, 55 to 77, 111 to 133, 146 to 168, 172 to 194, 207 to 229, 233 to 255, and 262 to 284; these read SIYLIALLPVLGWGFMPIIA, QLLGTSISALLFAFILFWIL, TVLSFIVSFVSGIFWSFGQLLQF, WQTVTAVIIGVVAVILILIGVVM, SVSFHVYGIVILSSFFLTLYVVT, FDVTGFSIILPQAIGMLTCAIGI, VTFNLMTGLSWSIANLGMFLATA, VATSFSISQACVIVATIGGILIF, and LEWTFILSGILLIMVGVVFLSLL.

The protein belongs to the GRP transporter (TC 2.A.7.5) family.

It is found in the cell membrane. The polypeptide is Putative sugar uptake protein lin0444 (Listeria innocua serovar 6a (strain ATCC BAA-680 / CLIP 11262)).